A 331-amino-acid chain; its full sequence is Adenosine deaminase (331 aa).

Residues His-12 and His-14 each coordinate Zn(2+). Substrate-binding residues include His-14, Asp-16, and Gly-170. A Zn(2+)-binding site is contributed by His-197. The active-site Proton donor is Glu-200. Residue Asp-278 participates in Zn(2+) binding. Asp-279 contributes to the substrate binding site.

Belongs to the metallo-dependent hydrolases superfamily. Adenosine and AMP deaminases family. Adenosine deaminase subfamily. Requires Zn(2+) as cofactor.

It carries out the reaction adenosine + H2O + H(+) = inosine + NH4(+). The catalysed reaction is 2'-deoxyadenosine + H2O + H(+) = 2'-deoxyinosine + NH4(+). Its function is as follows. Catalyzes the hydrolytic deamination of adenosine and 2-deoxyadenosine. This Shewanella loihica (strain ATCC BAA-1088 / PV-4) protein is Adenosine deaminase.